The chain runs to 90 residues: Large ribosomal subunit protein bL27 (90 aa).

The interval 1 to 21 (MASKKAGGSTRNGRDSEAKRL) is disordered.

The protein belongs to the bacterial ribosomal protein bL27 family.

This chain is Large ribosomal subunit protein bL27, found in Neisseria meningitidis serogroup C (strain 053442).